Reading from the N-terminus, the 318-residue chain is 4-hydroxy-3-methylbut-2-enyl diphosphate reductase (318 aa).

Cys-21 lines the [4Fe-4S] cluster pocket. The (2E)-4-hydroxy-3-methylbut-2-enyl diphosphate site is built by His-50 and His-83. 2 residues coordinate dimethylallyl diphosphate: His-50 and His-83. Isopentenyl diphosphate contacts are provided by His-50 and His-83. Cys-105 provides a ligand contact to [4Fe-4S] cluster. His-133 lines the (2E)-4-hydroxy-3-methylbut-2-enyl diphosphate pocket. His-133 lines the dimethylallyl diphosphate pocket. Isopentenyl diphosphate is bound at residue His-133. Glu-135 serves as the catalytic Proton donor. Thr-176 provides a ligand contact to (2E)-4-hydroxy-3-methylbut-2-enyl diphosphate. Cys-206 is a [4Fe-4S] cluster binding site. Residues Ser-234, Ser-235, Asn-236, and Ser-278 each contribute to the (2E)-4-hydroxy-3-methylbut-2-enyl diphosphate site. 4 residues coordinate dimethylallyl diphosphate: Ser-234, Ser-235, Asn-236, and Ser-278. Isopentenyl diphosphate contacts are provided by Ser-234, Ser-235, Asn-236, and Ser-278.

This sequence belongs to the IspH family. [4Fe-4S] cluster serves as cofactor.

The catalysed reaction is isopentenyl diphosphate + 2 oxidized [2Fe-2S]-[ferredoxin] + H2O = (2E)-4-hydroxy-3-methylbut-2-enyl diphosphate + 2 reduced [2Fe-2S]-[ferredoxin] + 2 H(+). It catalyses the reaction dimethylallyl diphosphate + 2 oxidized [2Fe-2S]-[ferredoxin] + H2O = (2E)-4-hydroxy-3-methylbut-2-enyl diphosphate + 2 reduced [2Fe-2S]-[ferredoxin] + 2 H(+). Its pathway is isoprenoid biosynthesis; dimethylallyl diphosphate biosynthesis; dimethylallyl diphosphate from (2E)-4-hydroxy-3-methylbutenyl diphosphate: step 1/1. It functions in the pathway isoprenoid biosynthesis; isopentenyl diphosphate biosynthesis via DXP pathway; isopentenyl diphosphate from 1-deoxy-D-xylulose 5-phosphate: step 6/6. Functionally, catalyzes the conversion of 1-hydroxy-2-methyl-2-(E)-butenyl 4-diphosphate (HMBPP) into a mixture of isopentenyl diphosphate (IPP) and dimethylallyl diphosphate (DMAPP). Acts in the terminal step of the DOXP/MEP pathway for isoprenoid precursor biosynthesis. This Shewanella oneidensis (strain ATCC 700550 / JCM 31522 / CIP 106686 / LMG 19005 / NCIMB 14063 / MR-1) protein is 4-hydroxy-3-methylbut-2-enyl diphosphate reductase.